The chain runs to 304 residues: Homoserine O-acetyltransferase (304 aa).

The Acyl-thioester intermediate role is filled by cysteine 142. Residues lysine 163 and serine 192 each contribute to the substrate site. Histidine 235 acts as the Proton acceptor in catalysis. Glutamate 237 is a catalytic residue. Residue arginine 249 coordinates substrate.

Belongs to the MetA family.

The protein localises to the cytoplasm. The enzyme catalyses L-homoserine + acetyl-CoA = O-acetyl-L-homoserine + CoA. Its pathway is amino-acid biosynthesis; L-methionine biosynthesis via de novo pathway; O-acetyl-L-homoserine from L-homoserine: step 1/1. Its function is as follows. Transfers an acetyl group from acetyl-CoA to L-homoserine, forming acetyl-L-homoserine. This is Homoserine O-acetyltransferase from Clostridium beijerinckii (strain ATCC 51743 / NCIMB 8052) (Clostridium acetobutylicum).